Here is a 179-residue protein sequence, read N- to C-terminus: Large ribosomal subunit protein uL5 (179 aa).

This sequence belongs to the universal ribosomal protein uL5 family. Part of the 50S ribosomal subunit; part of the 5S rRNA/L5/L18/L25 subcomplex. Contacts the 5S rRNA and the P site tRNA. Forms a bridge to the 30S subunit in the 70S ribosome.

Functionally, this is one of the proteins that bind and probably mediate the attachment of the 5S RNA into the large ribosomal subunit, where it forms part of the central protuberance. In the 70S ribosome it contacts protein S13 of the 30S subunit (bridge B1b), connecting the 2 subunits; this bridge is implicated in subunit movement. Contacts the P site tRNA; the 5S rRNA and some of its associated proteins might help stabilize positioning of ribosome-bound tRNAs. This Anaplasma marginale (strain Florida) protein is Large ribosomal subunit protein uL5.